The chain runs to 209 residues: Thymidylate kinase (209 aa).

10–17 (GPEGAGKT) is a binding site for ATP.

Belongs to the thymidylate kinase family.

It catalyses the reaction dTMP + ATP = dTDP + ADP. Functionally, phosphorylation of dTMP to form dTDP in both de novo and salvage pathways of dTTP synthesis. The polypeptide is Thymidylate kinase (Anoxybacillus flavithermus (strain DSM 21510 / WK1)).